The following is a 57-amino-acid chain: MKTILITQIKSQIGRLPKHKATMKGLGLRNIGDTVERKDTAAIRGMIKKVYYMISIK.

It belongs to the universal ribosomal protein uL30 family. Part of the 50S ribosomal subunit.

The chain is Large ribosomal subunit protein uL30 from Buchnera aphidicola subsp. Cinara cedri (strain Cc).